The sequence spans 803 residues: Cation channel sperm-associated auxiliary subunit delta (803 aa).

A signal peptide spans Met-1–Ala-15. The Extracellular segment spans residues Gln-16–Met-720. Intrachain disulfides connect Cys-19–Cys-365, Cys-55–Cys-142, Cys-141–Cys-148, Cys-383–Cys-492, Cys-506–Cys-698, Cys-521–Cys-568, and Cys-620–Cys-648. Asn-226, Asn-418, Asn-436, Asn-468, Asn-534, Asn-545, and Asn-626 each carry an N-linked (GlcNAc...) asparagine glycan. A helical transmembrane segment spans residues Thr-721 to Lys-742. Residues Gln-743 to Lys-803 are Cytoplasmic-facing. Residues Ser-782–Lys-803 are disordered.

It belongs to the CATSPERD family. As to quaternary structure, component of the CatSper complex or CatSpermasome composed of the core pore-forming members CATSPER1, CATSPER2, CATSPER3 and CATSPER4 as well as auxiliary members CATSPERB, CATSPERG, CATSPERD, CATSPERE, CATSPERZ, C2CD6/CATSPERT, SLCO6C1, TMEM249, TMEM262 and EFCAB9. HSPA1 may be an additional auxiliary complex member. The core complex members CATSPER1, CATSPER2, CATSPER3 and CATSPER4 form a heterotetrameric channel. The auxiliary CATSPERB, CATSPERG, CATSPERD and CATSPERE subunits form a pavilion-like structure over the pore which stabilizes the complex through interactions with CATSPER4, CATSPER3, CATSPER1 and CATSPER2 respectively. SLCO6C1 interacts with CATSPERE and TMEM262/CATSPERH interacts with CATSPERB, further stabilizing the complex. C2CD6/CATSPERT interacts at least with CATSPERD and is required for targeting the CatSper complex in the flagellar membrane.

The protein resides in the cell projection. It localises to the cilium. Its subcellular location is the flagellum membrane. Auxiliary component of the CatSper complex, a complex involved in sperm cell hyperactivation. Sperm cell hyperactivation is needed for sperm motility which is essential late in the preparation of sperm for fertilization. Required for CATSPER1 stability before intraflagellar transport and/or incorporation of the CatSper complex channel into the flagellar membrane. This Rattus norvegicus (Rat) protein is Cation channel sperm-associated auxiliary subunit delta.